A 171-amino-acid polypeptide reads, in one-letter code: Large ribosomal subunit protein uL10 (171 aa).

The protein belongs to the universal ribosomal protein uL10 family. In terms of assembly, part of the ribosomal stalk of the 50S ribosomal subunit. The N-terminus interacts with L11 and the large rRNA to form the base of the stalk. The C-terminus forms an elongated spine to which L12 dimers bind in a sequential fashion forming a multimeric L10(L12)X complex.

Functionally, forms part of the ribosomal stalk, playing a central role in the interaction of the ribosome with GTP-bound translation factors. This chain is Large ribosomal subunit protein uL10, found in Erythrobacter litoralis (strain HTCC2594).